Reading from the N-terminus, the 91-residue chain is Cell division protein CrgA (91 aa).

Residues 1 to 24 (MPKSKITTEGSALPQSSSSATNRT) are compositionally biased toward polar residues. The tract at residues 1–28 (MPKSKITTEGSALPQSSSSATNRTPVKI) is disordered. 2 helical membrane-spanning segments follow: residues 38–58 (IAIMLGLMLLGLLWLVVNYLA) and 68–88 (LGPWNYGIGFGLAIIGLLMTM).

This sequence belongs to the CrgA family.

The protein localises to the cell membrane. In terms of biological role, involved in cell division. This Corynebacterium aurimucosum (strain ATCC 700975 / DSM 44827 / CIP 107346 / CN-1) (Corynebacterium nigricans) protein is Cell division protein CrgA.